Consider the following 147-residue polypeptide: Hemoglobin subunit beta (147 aa).

Val2 carries the post-translational modification N-acetylvaline. The Globin domain occupies 3-147 (HLTGEEKAAV…VANALAHKYH (145 aa)). Residue Thr13 is modified to Phosphothreonine. Residue Ser45 is modified to Phosphoserine. Lys60 carries the post-translational modification N6-acetyllysine. Residue His64 coordinates heme b. N6-acetyllysine is present on Lys83. Heme b is bound at residue His93. Position 94 is an S-nitrosocysteine (Cys94). The residue at position 145 (Lys145) is an N6-acetyllysine.

Belongs to the globin family. As to quaternary structure, heterotetramer of two alpha chains and two beta chains. Red blood cells.

In terms of biological role, involved in oxygen transport from the lung to the various peripheral tissues. The protein is Hemoglobin subunit beta (HBB) of Aotus azarae (Azara's night monkey).